Here is a 224-residue protein sequence, read N- to C-terminus: Phosphoribosylformylglycinamidine synthase subunit PurQ (224 aa).

A Glutamine amidotransferase type-1 domain is found at 3–224; sequence FGVVVFPGSN…GLLEKVVALA (222 aa). Cys-86 (nucleophile) is an active-site residue. Residues His-195 and Glu-197 contribute to the active site.

In terms of assembly, part of the FGAM synthase complex composed of 1 PurL, 1 PurQ and 2 PurS subunits.

Its subcellular location is the cytoplasm. The catalysed reaction is N(2)-formyl-N(1)-(5-phospho-beta-D-ribosyl)glycinamide + L-glutamine + ATP + H2O = 2-formamido-N(1)-(5-O-phospho-beta-D-ribosyl)acetamidine + L-glutamate + ADP + phosphate + H(+). It catalyses the reaction L-glutamine + H2O = L-glutamate + NH4(+). Its pathway is purine metabolism; IMP biosynthesis via de novo pathway; 5-amino-1-(5-phospho-D-ribosyl)imidazole from N(2)-formyl-N(1)-(5-phospho-D-ribosyl)glycinamide: step 1/2. Functionally, part of the phosphoribosylformylglycinamidine synthase complex involved in the purines biosynthetic pathway. Catalyzes the ATP-dependent conversion of formylglycinamide ribonucleotide (FGAR) and glutamine to yield formylglycinamidine ribonucleotide (FGAM) and glutamate. The FGAM synthase complex is composed of three subunits. PurQ produces an ammonia molecule by converting glutamine to glutamate. PurL transfers the ammonia molecule to FGAR to form FGAM in an ATP-dependent manner. PurS interacts with PurQ and PurL and is thought to assist in the transfer of the ammonia molecule from PurQ to PurL. The protein is Phosphoribosylformylglycinamidine synthase subunit PurQ of Nostoc sp. (strain PCC 7120 / SAG 25.82 / UTEX 2576).